The sequence spans 60 residues: Large ribosomal subunit protein bL32 (60 aa).

Positions 1-16 (MAVPKRKTTPSKRGMR) are enriched in basic residues. The interval 1 to 60 (MAVPKRKTTPSKRGMRRSADALKQPAYVENPDSGELHRPHHVDLKSGMYRGKQILKPKGE) is disordered. Residues 34–44 (GELHRPHHVDL) are compositionally biased toward basic and acidic residues.

Belongs to the bacterial ribosomal protein bL32 family.

This Parvibaculum lavamentivorans (strain DS-1 / DSM 13023 / NCIMB 13966) protein is Large ribosomal subunit protein bL32.